The following is a 123-amino-acid chain: Large ribosomal subunit protein uL14 (123 aa).

The protein belongs to the universal ribosomal protein uL14 family. In terms of assembly, part of the 50S ribosomal subunit. Forms a cluster with proteins L3 and L19. In the 70S ribosome, L14 and L19 interact and together make contacts with the 16S rRNA in bridges B5 and B8.

Binds to 23S rRNA. Forms part of two intersubunit bridges in the 70S ribosome. This is Large ribosomal subunit protein uL14 from Aliivibrio fischeri (strain ATCC 700601 / ES114) (Vibrio fischeri).